We begin with the raw amino-acid sequence, 137 residues long: Actin-depolymerizing factor 12 (137 aa).

At S6 the chain carries Phosphoserine. The ADF-H domain occupies G7 to L137.

It belongs to the actin-binding proteins ADF family. In terms of tissue distribution, specifically expressed in pollen.

It localises to the cytoplasm. It is found in the cytoskeleton. Actin-depolymerizing protein. Severs actin filaments (F-actin) and binds to actin monomers. The sequence is that of Actin-depolymerizing factor 12 from Arabidopsis thaliana (Mouse-ear cress).